Consider the following 187-residue polypeptide: MKNQNTRVEEGIRMELNIDRIRIFEGDIVKMRVDAIVNAANNTLLGGGGVDGAIHRAAGPALLEECKTLNGCPTGEAKITSGYLLPAKYIIHTVGPVWQGGEKGEDELLASCYRKSLELARDYKIKTIAFPAISTGAYGFPSERAAGIAVSQVKEFLQKNEIPETVYLVCYNKDSCKSIKKALSKIL.

Residues 8–187 enclose the Macro domain; it reads VEEGIRMELN…SIKKALSKIL (180 aa).

This sequence belongs to the MacroD-type family.

The chain is Macro domain-containing protein MM_0177 from Methanosarcina mazei (strain ATCC BAA-159 / DSM 3647 / Goe1 / Go1 / JCM 11833 / OCM 88) (Methanosarcina frisia).